The following is a 154-amino-acid chain: MEKKTTKKATASKTTTTKKAAAEKTEIKETKKTTTTKTSTAKKATTASVEKTEVKETKKSSDNKKEFNPQDRPFAKYNRGYPNKQGRRKKFCKLCAKGQEHVDYKDVELLYKYLTPNLKIASRKITFACSKHQTRVSNAIKRARIVALIPFVRD.

The tract at residues 1-82 (MEKKTTKKAT…PFAKYNRGYP (82 aa)) is disordered. Low complexity predominate over residues 8–19 (KATASKTTTTKK). The segment covering 20–32 (AAAEKTEIKETKK) has biased composition (basic and acidic residues). The segment covering 33–49 (TTTTKTSTAKKATTASV) has biased composition (low complexity). A compositionally biased stretch (basic and acidic residues) spans 50-69 (EKTEVKETKKSSDNKKEFNP).

Belongs to the bacterial ribosomal protein bS18 family. In terms of assembly, part of the 30S ribosomal subunit. Forms a tight heterodimer with protein bS6.

In terms of biological role, binds as a heterodimer with protein bS6 to the central domain of the 16S rRNA, where it helps stabilize the platform of the 30S subunit. The polypeptide is Small ribosomal subunit protein bS18 (Malacoplasma penetrans (strain HF-2) (Mycoplasma penetrans)).